A 392-amino-acid chain; its full sequence is N-acetylneuraminate epimerase (392 aa).

The signal sequence occupies residues 1–35 (MTQLYPQYKKQLTTKIVLFSALSLLMMASLPNTYA). 7 Kelch repeats span residues 56–100 (SLYV…VVLA), 102–155 (KLYV…TTLD), 157–192 (SQAVLLGGVNKAIFDGYFTDLASAGSDEVRKSAVIN), 193–238 (AYFN…SRMD), 241–290 (LILI…LAGA), 312–361 (KQFN…QGPD), and 363–392 (VILIGGETTGGTATSAVTQLSWQGGKLHIE). The active-site Proton acceptor is the E247.

This sequence belongs to the NanM family. In terms of assembly, homodimer.

It is found in the periplasm. The catalysed reaction is N-acetyl-alpha-neuraminate = N-acetyl-beta-neuraminate. Functionally, converts alpha-N-acetylneuranimic acid (Neu5Ac) to the beta-anomer, accelerating the equilibrium between the alpha- and beta-anomers. Probably facilitates sialidase-negative bacteria to compete successfully for limited amounts of extracellular Neu5Ac, which is likely taken up in the beta-anomer. In addition, the rapid removal of sialic acid from solution might be advantageous to the bacterium to damp down host responses. The chain is N-acetylneuraminate epimerase from Yersinia pseudotuberculosis serotype O:1b (strain IP 31758).